Here is a 245-residue protein sequence, read N- to C-terminus: 2,3-bisphosphoglycerate-dependent phosphoglycerate mutase (245 aa).

Substrate is bound by residues 8–15 (RHGQSLWN), 21–22 (TG), R60, 87–90 (ERHY), K98, 114–115 (RR), and 183–184 (GN). H9 (tele-phosphohistidine intermediate) is an active-site residue. The active-site Proton donor/acceptor is the E87.

The protein belongs to the phosphoglycerate mutase family. BPG-dependent PGAM subfamily.

It carries out the reaction (2R)-2-phosphoglycerate = (2R)-3-phosphoglycerate. It participates in carbohydrate degradation; glycolysis; pyruvate from D-glyceraldehyde 3-phosphate: step 3/5. Its function is as follows. Catalyzes the interconversion of 2-phosphoglycerate and 3-phosphoglycerate. The protein is 2,3-bisphosphoglycerate-dependent phosphoglycerate mutase of Bacillus cereus (strain AH187).